Consider the following 137-residue polypeptide: NADH-quinone oxidoreductase subunit A 1 (137 aa).

3 helical membrane-spanning segments follow: residues 14-34, 66-86, and 95-115; these read FAAF…VSAL, FYLV…LFAW, and WAGL…LVYL.

The protein belongs to the complex I subunit 3 family. As to quaternary structure, NDH-1 is composed of 13 different subunits. Subunits NuoA, H, J, K, L, M, N constitute the membrane sector of the complex.

The protein resides in the cell inner membrane. The enzyme catalyses a quinone + NADH + 5 H(+)(in) = a quinol + NAD(+) + 4 H(+)(out). NDH-1 shuttles electrons from NADH, via FMN and iron-sulfur (Fe-S) centers, to quinones in the respiratory chain. The immediate electron acceptor for the enzyme in this species is believed to be ubiquinone. Couples the redox reaction to proton translocation (for every two electrons transferred, four hydrogen ions are translocated across the cytoplasmic membrane), and thus conserves the redox energy in a proton gradient. The polypeptide is NADH-quinone oxidoreductase subunit A 1 (Pseudomonas paraeruginosa (strain DSM 24068 / PA7) (Pseudomonas aeruginosa (strain PA7))).